We begin with the raw amino-acid sequence, 218 residues long: GTP cyclohydrolase 1 (218 aa).

Residues Cys109, His112, and Cys180 each coordinate Zn(2+).

It belongs to the GTP cyclohydrolase I family. Toroid-shaped homodecamer, composed of two pentamers of five dimers.

It catalyses the reaction GTP + H2O = 7,8-dihydroneopterin 3'-triphosphate + formate + H(+). It participates in cofactor biosynthesis; 7,8-dihydroneopterin triphosphate biosynthesis; 7,8-dihydroneopterin triphosphate from GTP: step 1/1. This is GTP cyclohydrolase 1 from Mannheimia succiniciproducens (strain KCTC 0769BP / MBEL55E).